Reading from the N-terminus, the 237-residue chain is Ubiquitin-conjugating enzyme E2 34 (237 aa).

The 158-residue stretch at 5 to 162 (ACIKRLQKEY…FPEYVEKYNQ (158 aa)) folds into the UBC core domain. Residue cysteine 87 is the Glycyl thioester intermediate of the active site. Positions 168-207 (QATTQLTTPESPQKSDTKVESEKTIDPTKGDSEGGLKERK) are disordered. Residues 180 to 204 (QKSDTKVESEKTIDPTKGDSEGGLK) are compositionally biased toward basic and acidic residues. A helical membrane pass occupies residues 214-234 (LPAWIILLLVSVFGVVMALPL).

It belongs to the ubiquitin-conjugating enzyme family.

The protein localises to the membrane. It catalyses the reaction S-ubiquitinyl-[E1 ubiquitin-activating enzyme]-L-cysteine + [E2 ubiquitin-conjugating enzyme]-L-cysteine = [E1 ubiquitin-activating enzyme]-L-cysteine + S-ubiquitinyl-[E2 ubiquitin-conjugating enzyme]-L-cysteine.. Its pathway is protein modification; protein ubiquitination. Functionally, accepts the ubiquitin from the E1 complex and catalyzes its covalent attachment to other proteins. The polypeptide is Ubiquitin-conjugating enzyme E2 34 (UBC34) (Arabidopsis thaliana (Mouse-ear cress)).